Here is a 505-residue protein sequence, read N- to C-terminus: Protein nucleotidyltransferase YdiU (505 aa).

Residues Gly102, Gly104, Arg105, Lys125, Asp137, Gly138, Arg188, and Arg195 each contribute to the ATP site. Asp264 serves as the catalytic Proton acceptor. 2 residues coordinate Mg(2+): Asn265 and Asp274. Residue Asp274 coordinates ATP.

The protein belongs to the SELO family. Requires Mg(2+) as cofactor. The cofactor is Mn(2+).

It carries out the reaction L-seryl-[protein] + ATP = 3-O-(5'-adenylyl)-L-seryl-[protein] + diphosphate. The catalysed reaction is L-threonyl-[protein] + ATP = 3-O-(5'-adenylyl)-L-threonyl-[protein] + diphosphate. It catalyses the reaction L-tyrosyl-[protein] + ATP = O-(5'-adenylyl)-L-tyrosyl-[protein] + diphosphate. The enzyme catalyses L-histidyl-[protein] + UTP = N(tele)-(5'-uridylyl)-L-histidyl-[protein] + diphosphate. It carries out the reaction L-seryl-[protein] + UTP = O-(5'-uridylyl)-L-seryl-[protein] + diphosphate. The catalysed reaction is L-tyrosyl-[protein] + UTP = O-(5'-uridylyl)-L-tyrosyl-[protein] + diphosphate. Functionally, nucleotidyltransferase involved in the post-translational modification of proteins. It can catalyze the addition of adenosine monophosphate (AMP) or uridine monophosphate (UMP) to a protein, resulting in modifications known as AMPylation and UMPylation. This chain is Protein nucleotidyltransferase YdiU, found in Nitrobacter winogradskyi (strain ATCC 25391 / DSM 10237 / CIP 104748 / NCIMB 11846 / Nb-255).